The sequence spans 423 residues: MALKVLLEQEKTFFTLLVLLGYLSCKVTCESGDCRQQEFRDRSGNCVPCNQCGPGMELSKECGFGYGEDAQCVTCRLHRFKEDWGFQKCKPCLDCAVVNRFQKANCSATSDAICGDCLPGFYRKTKLVGFQDMECVPCGDPPPPYEPHCASKVNLVKIASTASSPRDTALAAVICSALATVLLALLILCVIYCKRQFMEKKPSWSLRSQDIQYNGSELSCFDRPQLHEYAHRACCQCRRDSVQTCGPVRLLPSMCCEEACSPNPATLGCGVHSAASLQARNAGPAGEMVPTFFGSLTQSICGEFSDAWPLMQNPMGGDNISFCDSYPELTGEDIHSLNPELESSTSLDSNSSQDLVGGAVPVQSHSENFTAATDLSRYNNTLVESASTQDALTMRSQLDQESGAVIHPATQTSLQVRQRLGSL.

Positions 1 to 29 (MALKVLLEQEKTFFTLLVLLGYLSCKVTC) are cleaved as a signal peptide. Residues 30–170 (ESGDCRQQEF…TASSPRDTAL (141 aa)) lie on the Extracellular side of the membrane. TNFR-Cys repeat units lie at residues 33–72 (DCRQQEFRDRSGNCVPCNQCGPGMELSKECGFGYGEDAQC), 74–114 (TCRL…DAIC), and 116–149 (DCLPGFYRKTKLVGFQDMECVPCGDPPPPYEPHC). Intrachain disulfides connect C34–C46, C49–C62, C52–C72, C75–C89, C92–C106, C95–C114, C117–C135, and C138–C149. A glycan (N-linked (GlcNAc...) asparagine) is linked at N105. The helical transmembrane segment at 171–191 (AAVICSALATVLLALLILCVI) threads the bilayer. The Cytoplasmic portion of the chain corresponds to 192-423 (YCKRQFMEKK…LQVRQRLGSL (232 aa)).

As to quaternary structure, associates with TRAF1, TRAF2, TRAF3 and TRAF5. Interacts with LINGO1. Highly expressed in prostate. Detected at lower levels in thymus, spleen, testis, uterus, small intestine, colon and peripheral blood leukocytes.

The protein resides in the membrane. In terms of biological role, can mediate activation of JNK and NF-kappa-B. May promote caspase-independent cell death. In Homo sapiens (Human), this protein is Tumor necrosis factor receptor superfamily member 19 (TNFRSF19).